Reading from the N-terminus, the 588-residue chain is Adenine deaminase (588 aa).

Belongs to the metallo-dependent hydrolases superfamily. Adenine deaminase family. As to quaternary structure, homodimer. It depends on Mn(2+) as a cofactor.

The enzyme catalyses adenine + H2O + H(+) = hypoxanthine + NH4(+). In Shigella sonnei (strain Ss046), this protein is Adenine deaminase.